Consider the following 244-residue polypeptide: MSAASGGFQPRERRFSVQEQDWETTPPKKLRLGAGSKCGGRRLIVVLEGASLETVKVGKTYELLNCDRHKSMLLKNGRDPGEVRPDITHQSLLMLMDSPLNRAGLLQVYIHTQKNVLIEVNPQTRIPRTFDRFCGLMVQLLHKLSVRAADGPQKLLKVIKNPVSDHFPVGCMKIGTSFSVEDISDIRELVPSSDPVVFVVGAFAHGKVSVEYTEKMVSISNYPLSAALTCAKVTTAFEEVWGVI.

Residues Met-1 to Gly-33 form a disordered region. 2 positions are modified to phosphoserine: Ser-5 and Ser-16. S-adenosyl-L-methionine is bound by residues Thr-176, Gly-201, Gly-206, and Ile-219–Leu-224.

Belongs to the class IV-like SAM-binding methyltransferase superfamily. RNA methyltransferase NEP1 family. As to quaternary structure, homodimer. Part of the small subunit (SSU) processome, composed of more than 70 proteins and the RNA chaperone small nucleolar RNA (snoRNA) U3.

The protein resides in the nucleus. Its subcellular location is the nucleolus. It catalyses the reaction pseudouridine(1248) in human 18S rRNA + S-adenosyl-L-methionine = N(1)-methylpseudouridine(1248) in human 18S rRNA + S-adenosyl-L-homocysteine + H(+). S-adenosyl-L-methionine-dependent pseudouridine N(1)-methyltransferase that methylates pseudouridine at position in 18S rRNA. Involved the biosynthesis of the hypermodified N1-methyl-N3-(3-amino-3-carboxypropyl) pseudouridine (m1acp3-Psi) conserved in eukaryotic 18S rRNA. Is not able to methylate uridine at this position. Also has an essential role in 40S ribosomal subunit biogenesis independent on its methyltransferase activity, facilitating the incorporation of ribosomal protein S19 during the formation of pre-ribosomes. Part of the small subunit (SSU) processome, first precursor of the small eukaryotic ribosomal subunit. During the assembly of the SSU processome in the nucleolus, many ribosome biogenesis factors, an RNA chaperone and ribosomal proteins associate with the nascent pre-rRNA and work in concert to generate RNA folding, modifications, rearrangements and cleavage as well as targeted degradation of pre-ribosomal RNA by the RNA exosome. The protein is Ribosomal RNA small subunit methyltransferase NEP1 of Mus musculus (Mouse).